The primary structure comprises 332 residues: 5-dehydro-2-deoxygluconokinase (332 aa).

Belongs to the carbohydrate kinase PfkB family.

The enzyme catalyses 5-dehydro-2-deoxy-D-gluconate + ATP = 6-phospho-5-dehydro-2-deoxy-D-gluconate + ADP + H(+). It participates in polyol metabolism; myo-inositol degradation into acetyl-CoA; acetyl-CoA from myo-inositol: step 5/7. Its function is as follows. Catalyzes the phosphorylation of 5-dehydro-2-deoxy-D-gluconate (2-deoxy-5-keto-D-gluconate or DKG) to 6-phospho-5-dehydro-2-deoxy-D-gluconate (DKGP). This Bacillus thuringiensis (strain Al Hakam) protein is 5-dehydro-2-deoxygluconokinase.